Reading from the N-terminus, the 236-residue chain is Leucyl/phenylalanyl-tRNA--protein transferase (236 aa).

This sequence belongs to the L/F-transferase family.

Its subcellular location is the cytoplasm. The catalysed reaction is N-terminal L-lysyl-[protein] + L-leucyl-tRNA(Leu) = N-terminal L-leucyl-L-lysyl-[protein] + tRNA(Leu) + H(+). It catalyses the reaction N-terminal L-arginyl-[protein] + L-leucyl-tRNA(Leu) = N-terminal L-leucyl-L-arginyl-[protein] + tRNA(Leu) + H(+). The enzyme catalyses L-phenylalanyl-tRNA(Phe) + an N-terminal L-alpha-aminoacyl-[protein] = an N-terminal L-phenylalanyl-L-alpha-aminoacyl-[protein] + tRNA(Phe). Its function is as follows. Functions in the N-end rule pathway of protein degradation where it conjugates Leu, Phe and, less efficiently, Met from aminoacyl-tRNAs to the N-termini of proteins containing an N-terminal arginine or lysine. The sequence is that of Leucyl/phenylalanyl-tRNA--protein transferase from Vibrio campbellii (strain ATCC BAA-1116).